The chain runs to 226 residues: Ribonuclease 3 (226 aa).

Positions 6–128 (TNRLQKKLGY…LIGGVFLDSD (123 aa)) constitute an RNase III domain. Position 41 (E41) interacts with Mg(2+). D45 is a catalytic residue. The Mg(2+) site is built by D114 and E117. E117 is an active-site residue. A DRBM domain is found at 155–225 (DPKTRLQEYL…AEQALKLLEL (71 aa)).

This sequence belongs to the ribonuclease III family. Homodimer. It depends on Mg(2+) as a cofactor.

The protein localises to the cytoplasm. The enzyme catalyses Endonucleolytic cleavage to 5'-phosphomonoester.. Its function is as follows. Digests double-stranded RNA. Involved in the processing of primary rRNA transcript to yield the immediate precursors to the large and small rRNAs (23S and 16S). Processes some mRNAs, and tRNAs when they are encoded in the rRNA operon. Processes pre-crRNA and tracrRNA of type II CRISPR loci if present in the organism. This is Ribonuclease 3 from Sodalis glossinidius (strain morsitans).